Consider the following 240-residue polypeptide: DNA repair protein RecO (240 aa).

The protein belongs to the RecO family.

Its function is as follows. Involved in DNA repair and RecF pathway recombination. In Xanthomonas euvesicatoria pv. vesicatoria (strain 85-10) (Xanthomonas campestris pv. vesicatoria), this protein is DNA repair protein RecO.